The following is a 303-amino-acid chain: Dihydroorotate dehydrogenase B (NAD(+)), catalytic subunit (303 aa).

FMN is bound by residues Ser-23 and Lys-47–Ser-48. Residues Lys-47, Asn-71–Leu-75, and Asn-125 each bind substrate. An FMN-binding site is contributed by Asn-125. Catalysis depends on Cys-128, which acts as the Nucleophile. Lys-163 and Ile-189 together coordinate FMN. Asn-190–Thr-191 lines the substrate pocket. Residues Gly-215, Gly-241–Gly-242, and Gly-263–Thr-264 contribute to the FMN site.

It belongs to the dihydroorotate dehydrogenase family. Type 1 subfamily. Heterotetramer of 2 PyrK and 2 PyrD type B subunits. FMN serves as cofactor.

The protein resides in the cytoplasm. The enzyme catalyses (S)-dihydroorotate + NAD(+) = orotate + NADH + H(+). The protein operates within pyrimidine metabolism; UMP biosynthesis via de novo pathway; orotate from (S)-dihydroorotate (NAD(+) route): step 1/1. Its function is as follows. Catalyzes the conversion of dihydroorotate to orotate with NAD(+) as electron acceptor. The protein is Dihydroorotate dehydrogenase B (NAD(+)), catalytic subunit (pyrD) of Pyrococcus horikoshii (strain ATCC 700860 / DSM 12428 / JCM 9974 / NBRC 100139 / OT-3).